Here is a 121-residue protein sequence, read N- to C-terminus: MEKGFSVGWRIRTTAEFRRIYAARQRIIGRYYLLYYRENEIKHSRLGVVASKRNVRKAVWRNRVRRVVKETFRIRKKDLPAFDIVVVAKASSVEADNKELYECINKLFTQLERQSKRSSSV.

This sequence belongs to the RnpA family. In terms of assembly, consists of a catalytic RNA component (M1 or rnpB) and a protein subunit.

It catalyses the reaction Endonucleolytic cleavage of RNA, removing 5'-extranucleotides from tRNA precursor.. Its function is as follows. RNaseP catalyzes the removal of the 5'-leader sequence from pre-tRNA to produce the mature 5'-terminus. It can also cleave other RNA substrates such as 4.5S RNA. The protein component plays an auxiliary but essential role in vivo by binding to the 5'-leader sequence and broadening the substrate specificity of the ribozyme. The sequence is that of Ribonuclease P protein component from Coxiella burnetii (strain Dugway 5J108-111).